The sequence spans 344 residues: uncharacterized protein (344 aa).

This is an uncharacterized protein from Caenorhabditis elegans.